We begin with the raw amino-acid sequence, 530 residues long: Berberine bridge enzyme-like 22 (530 aa).

The first 22 residues, 1-22, serve as a signal peptide directing secretion; it reads MRELFMYLFLLFLVLCVKSVYS. Cysteines 32 and 99 form a disulfide. Asn39, Asn47, Asn68, Asn75, Asn141, and Asn486 each carry an N-linked (GlcNAc...) asparagine glycan. The FAD-binding PCMH-type domain maps to 77–251; the sequence is TSLKPILIVK…LSWKVKLARV (175 aa). The 6-(S-cysteinyl)-8alpha-(pros-histidyl)-FAD (His-Cys) cross-link spans 114-176; that stretch reads HDYEGLSYLS…KIHAFAAGIC (63 aa).

It belongs to the oxygen-dependent FAD-linked oxidoreductase family. It depends on FAD as a cofactor. Post-translationally, the FAD cofactor is bound via a bicovalent 6-S-cysteinyl, 8alpha-N1-histidyl FAD linkage. As to expression, accumulates in cell walls of etiolated hypocotyls.

Its subcellular location is the secreted. The protein localises to the cell wall. The chain is Berberine bridge enzyme-like 22 from Arabidopsis thaliana (Mouse-ear cress).